The primary structure comprises 305 residues: Ribonuclease BN (305 aa).

Histidine 64, histidine 66, aspartate 68, histidine 69, histidine 141, aspartate 212, and histidine 270 together coordinate Zn(2+). The active-site Proton acceptor is the aspartate 68.

Belongs to the RNase Z family. RNase BN subfamily. As to quaternary structure, homodimer. Zn(2+) is required as a cofactor.

Zinc phosphodiesterase, which has both exoribonuclease and endoribonuclease activities. In Escherichia coli O7:K1 (strain IAI39 / ExPEC), this protein is Ribonuclease BN.